The following is a 173-amino-acid chain: MKLLFPIFASLMLQYKVNTEFIGLRRCLMGFGRCRDHCNVDEKEIQKCKMKKCCVGPKVVKLIKNYLQYGTPNVLNEDVQEMLKSAKNSSAVIQRKHILSVLPQIKSTSFFANTNFVIIPNATPMNSAIISTVTPGQITYTAASTKSNIKESRDSATASPPPAPPPPNTLPTP.

Residues 1–19 form the signal peptide; the sequence is MKLLFPIFASLMLQYKVNT. 3 disulfides stabilise this stretch: C27-C53, C34-C48, and C38-C54. Residues 144–173 form a disordered region; it reads STKSNIKESRDSATASPPPAPPPPNTLPTP. The segment covering 159–173 has biased composition (pro residues); sequence SPPPAPPPPNTLPTP.

Belongs to the beta-defensin family.

The protein localises to the secreted. Has antibacterial activity. In Hylobates lar (Lar gibbon), this protein is Beta-defensin 129 (DEFB129).